A 202-amino-acid chain; its full sequence is Orotate phosphoribosyltransferase (202 aa).

113 to 121 (EDIITTGGS) provides a ligand contact to 5-phospho-alpha-D-ribose 1-diphosphate. Positions 117 and 145 each coordinate orotate.

Belongs to the purine/pyrimidine phosphoribosyltransferase family. PyrE subfamily. As to quaternary structure, homodimer. The cofactor is Mg(2+).

The catalysed reaction is orotidine 5'-phosphate + diphosphate = orotate + 5-phospho-alpha-D-ribose 1-diphosphate. It participates in pyrimidine metabolism; UMP biosynthesis via de novo pathway; UMP from orotate: step 1/2. Its function is as follows. Catalyzes the transfer of a ribosyl phosphate group from 5-phosphoribose 1-diphosphate to orotate, leading to the formation of orotidine monophosphate (OMP). This chain is Orotate phosphoribosyltransferase, found in Sulfurimonas denitrificans (strain ATCC 33889 / DSM 1251) (Thiomicrospira denitrificans (strain ATCC 33889 / DSM 1251)).